The chain runs to 59 residues: Large ribosomal subunit protein bL32 (59 aa).

The disordered stretch occupies residues 1-59 (MAVQQNKKSPSKRGMHRAHDFLTTPPLAVESTTGEAHLRHHISPAGFYRGKKVTKGKGE). A compositionally biased stretch (basic residues) spans 49-59 (RGKKVTKGKGE).

It belongs to the bacterial ribosomal protein bL32 family.

The chain is Large ribosomal subunit protein bL32 from Dechloromonas aromatica (strain RCB).